Reading from the N-terminus, the 388-residue chain is L-lactate dehydrogenase (388 aa).

An FMN hydroxy acid dehydrogenase domain is found at 1-380 (MIISAASDYR…SADALSRVTR (380 aa)). Substrate is bound at residue Tyr-24. Ser-106 and Gln-127 together coordinate FMN. Tyr-129 provides a ligand contact to substrate. Thr-155 lines the FMN pocket. Arg-164 is a binding site for substrate. Lys-251 provides a ligand contact to FMN. His-275 acts as the Proton acceptor in catalysis. Arg-278 lines the substrate pocket. 306-330 (DSGIRSGLDVVRMLALGADAVLLGR) is an FMN binding site.

The protein belongs to the FMN-dependent alpha-hydroxy acid dehydrogenase family. FMN is required as a cofactor.

Its subcellular location is the cell inner membrane. It catalyses the reaction (S)-lactate + A = pyruvate + AH2. In terms of biological role, catalyzes the conversion of L-lactate to pyruvate. Is coupled to the respiratory chain. In Xanthomonas axonopodis pv. citri (strain 306), this protein is L-lactate dehydrogenase.